Consider the following 203-residue polypeptide: 3-isopropylmalate dehydratase small subunit (203 aa).

The protein belongs to the LeuD family. LeuD type 1 subfamily. In terms of assembly, heterodimer of LeuC and LeuD.

It carries out the reaction (2R,3S)-3-isopropylmalate = (2S)-2-isopropylmalate. Its pathway is amino-acid biosynthesis; L-leucine biosynthesis; L-leucine from 3-methyl-2-oxobutanoate: step 2/4. In terms of biological role, catalyzes the isomerization between 2-isopropylmalate and 3-isopropylmalate, via the formation of 2-isopropylmaleate. The protein is 3-isopropylmalate dehydratase small subunit of Pelagibacter ubique (strain HTCC1062).